The sequence spans 387 residues: Lactosylceramide alpha-2,3-sialyltransferase (387 aa).

The Cytoplasmic segment spans residues 1-33 (MPNEFTSAKLRSDCSRTSLQWYTQTQHKMRRPS). The chain crosses the membrane as a helical; Signal-anchor for type II membrane protein span at residues 34 to 54 (LLLKDILKCMLVVFGVWLLYI). Over 55-387 (LKLNYTAEEC…VVQDLSGGIH (333 aa)) the chain is Extracellular. N-linked (GlcNAc...) asparagine glycans are attached at residues asparagine 58 and asparagine 208. A disulfide bridge links cysteine 167 with cysteine 325.

Belongs to the glycosyltransferase 29 family.

It is found in the golgi apparatus membrane. The catalysed reaction is a beta-D-Gal-(1-&gt;4)-beta-D-Glc-(1&lt;-&gt;1)-Cer(d18:1(4E)) + CMP-N-acetyl-beta-neuraminate = a ganglioside GM3 (d18:1(4E)) + CMP + H(+). It catalyses the reaction ganglioside GA2 (d18:1(4E)/18:0) + CMP-N-acetyl-beta-neuraminate = ganglioside GM2 (d18:1(4E)/18:0) + CMP + H(+). The enzyme catalyses a beta-D-Gal-(1&lt;-&gt;1')-ceramide + CMP-N-acetyl-beta-neuraminate = N-acetyl-alpha-neuraminosyl-(2-&gt;3)-beta-D-galactosyl-(1&lt;-&gt;1')-ceramide + CMP + H(+). It carries out the reaction ganglioside GA1 (d18:1(4E)/18:0) + CMP-N-acetyl-beta-neuraminate = ganglioside GM1 (d18:1(4E)/18:0) + CMP + H(+). Its function is as follows. Transfers the sialyl group (N-acetyl-alpha-neuraminyl or NeuAc) from CMP-NeuAc to the non-reducing terminal galactose (Gal) of glycosphingolipids forming gangliosides (important molecules involved in the regulation of multiple cellular processes, including cell proliferation and differentiation, apoptosis, embryogenesis, development, and oncogenesis). Mainly involved in the biosynthesis of ganglioside GM3 but can also use different glycolipids as substrate acceptors such as D-galactosylceramide (GalCer), asialo-GM2 (GA2) and asialo-GM1 (GA1), although less preferentially than beta-D-Gal-(1-&gt;4)-beta-D-Glc-(1&lt;-&gt;1)-Cer (LacCer). This Rattus norvegicus (Rat) protein is Lactosylceramide alpha-2,3-sialyltransferase (St3gal5).